The chain runs to 264 residues: Phosphonates import ATP-binding protein PhnC (264 aa).

The 248-residue stretch at 7-254 folds into the ABC transporter domain; it reads LSIRAASKTF…KLIDIYGPEF (248 aa). 39–46 contributes to the ATP binding site; sequence GPSGSGKS.

Belongs to the ABC transporter superfamily. Phosphonates importer (TC 3.A.1.9.1) family. The complex is composed of two ATP-binding proteins (PhnC), two transmembrane proteins (PhnE) and a solute-binding protein (PhnD).

The protein localises to the cell inner membrane. The enzyme catalyses phosphonate(out) + ATP + H2O = phosphonate(in) + ADP + phosphate + H(+). Its function is as follows. Part of the ABC transporter complex PhnCDE involved in phosphonates import. Responsible for energy coupling to the transport system. In Caulobacter vibrioides (strain ATCC 19089 / CIP 103742 / CB 15) (Caulobacter crescentus), this protein is Phosphonates import ATP-binding protein PhnC.